The primary structure comprises 114 residues: Ribonuclease P protein component (114 aa).

It belongs to the RnpA family. In terms of assembly, consists of a catalytic RNA component (M1 or rnpB) and a protein subunit.

It catalyses the reaction Endonucleolytic cleavage of RNA, removing 5'-extranucleotides from tRNA precursor.. RNaseP catalyzes the removal of the 5'-leader sequence from pre-tRNA to produce the mature 5'-terminus. It can also cleave other RNA substrates such as 4.5S RNA. The protein component plays an auxiliary but essential role in vivo by binding to the 5'-leader sequence and broadening the substrate specificity of the ribozyme. The protein is Ribonuclease P protein component of Buchnera aphidicola subsp. Baizongia pistaciae (strain Bp).